A 967-amino-acid chain; its full sequence is uncharacterized protein (967 aa).

Disordered stretches follow at residues 1–23 and 41–72; these read MQNA…FHDR and FTMH…DPRT. Positions 14 to 23 are enriched in basic and acidic residues; the sequence is KGRDVNFHDR. Residues 60–72 are compositionally biased toward polar residues; sequence RLSNYSSAVDPRT. At Ser86 the chain carries Phosphoserine. 5 disordered regions span residues 135-259, 271-296, 380-399, 437-464, and 499-544; these read AVSE…QHLP, SVSR…SPPE, DSTT…APHK, HSYG…FVAD, and GTRF…KSLS. A compositionally biased stretch (polar residues) spans 162–187; the sequence is ESSTSNNLETGNSTNTALHNVSSPLE. The span at 205–218 shows a compositional bias: basic and acidic residues; sequence HDLDEVISEKDTSL. A compositionally biased stretch (basic residues) spans 221–234; that stretch reads RSSRGRSSAPKRRK. Residues 278 to 294 are compositionally biased toward low complexity; it reads SPASTPRSSVSSVSSSP. Over residues 382–394 the composition is skewed to polar residues; that stretch reads TTEYVNTESSSKT. Basic residues predominate over residues 499 to 508; it reads GTRFHSRSSH. Phosphoserine is present on Ser585. Disordered regions lie at residues 594–665 and 681–708; these read ESNE…SVND and DHRI…ESQH. Basic and acidic residues predominate over residues 608 to 622; sequence YDSRESTGHTIKELR. Positions 686 to 704 are enriched in low complexity; the sequence is ASDNQNNNNNDANALAENS. 728 to 736 contributes to the substrate binding site; that stretch reads PCVLDVKMG.

It belongs to the inositol phosphokinase (IPK) family.

It is found in the cytoplasm. This is an uncharacterized protein from Schizosaccharomyces pombe (strain 972 / ATCC 24843) (Fission yeast).